Here is a 130-residue protein sequence, read N- to C-terminus: Large ribosomal subunit protein bL12c (130 aa).

Belongs to the bacterial ribosomal protein bL12 family. As to quaternary structure, homodimer. Part of the ribosomal stalk of the 50S ribosomal subunit. Forms a multimeric L10(L12)X complex, where L10 forms an elongated spine to which 2 to 4 L12 dimers bind in a sequential fashion. Binds GTP-bound translation factors.

It is found in the plastid. In terms of biological role, forms part of the ribosomal stalk which helps the ribosome interact with GTP-bound translation factors. Is thus essential for accurate translation. This Prototheca wickerhamii protein is Large ribosomal subunit protein bL12c.